Consider the following 251-residue polypeptide: Probable transcriptional regulatory protein DET0444 (251 aa).

The protein belongs to the TACO1 family.

The protein localises to the cytoplasm. The protein is Probable transcriptional regulatory protein DET0444 of Dehalococcoides mccartyi (strain ATCC BAA-2266 / KCTC 15142 / 195) (Dehalococcoides ethenogenes (strain 195)).